Here is a 295-residue protein sequence, read N- to C-terminus: Protein FAM110A (295 aa).

2 disordered regions span residues 117 to 148 (PVSP…PPSI) and 160 to 191 (PASP…KSDL). Composition is skewed to pro residues over residues 138 to 147 (LATPPRPPPS) and 160 to 171 (PASPIQPCPSPG).

Belongs to the FAM110 family. As to quaternary structure, may interact with CSPP1.

The protein resides in the cytoplasm. The protein localises to the cytoskeleton. It is found in the microtubule organizing center. It localises to the centrosome. Its subcellular location is the spindle pole. This chain is Protein FAM110A (FAM110A), found in Bos taurus (Bovine).